A 257-amino-acid chain; its full sequence is Acetylglutamate kinase (257 aa).

Residues 43-44 (GG), Arg-65, and Asn-157 contribute to the substrate site.

This sequence belongs to the acetylglutamate kinase family. ArgB subfamily.

The protein localises to the cytoplasm. It carries out the reaction N-acetyl-L-glutamate + ATP = N-acetyl-L-glutamyl 5-phosphate + ADP. The protein operates within amino-acid biosynthesis; L-arginine biosynthesis; N(2)-acetyl-L-ornithine from L-glutamate: step 2/4. In terms of biological role, catalyzes the ATP-dependent phosphorylation of N-acetyl-L-glutamate. This chain is Acetylglutamate kinase, found in Mannheimia succiniciproducens (strain KCTC 0769BP / MBEL55E).